The primary structure comprises 437 residues: Regulator of phospholipase D SRF1 (437 aa).

Residues 1–24 (MGDSNSSQEAYSDTTSTNASRIAD) are disordered. Topologically, residues 1–267 (MGDSNSSQEA…LTSLLLDNQY (267 aa)) are cytoplasmic. Residues S45 and S167 each carry the phosphoserine modification. Residues 268 to 288 (LILGLRIFTGILSCISLALAI) form a helical membrane-spanning segment. Residues 289–308 (KIFQNSRSNNTISESKIGQQ) are Extracellular-facing. N297 is a glycosylation site (N-linked (GlcNAc...) asparagine). A helical transmembrane segment spans residues 309 to 329 (PSTIMAICVNAVAIAYIIYIA). At 330–348 (HDEFAGKPVGLRNPLSKLK) the chain is on the cytoplasmic side. The helical transmembrane segment at 349 to 369 (LILLDLLFIIFSSANLALAFN) threads the bilayer. Over 370–403 (TRFDKEWVCTSIRRSNGSTYGYPKIPRICRKQEA) the chain is Extracellular. A glycan (N-linked (GlcNAc...) asparagine) is linked at N385. The helical transmembrane segment at 404–424 (LSAFLFVALFMWVITFSISIV) threads the bilayer. Topologically, residues 425-437 (RVVEKVSSITNRN) are cytoplasmic.

As to quaternary structure, interacts with SPO14.

It is found in the membrane. Functionally, regulator of phospholipase D (SPO14) which is required for SPO14 catalytic activity in mitotic cells. Essential to buffer the toxic effects of C16:0 platelet activating factor. The sequence is that of Regulator of phospholipase D SRF1 (SRF1) from Saccharomyces cerevisiae (strain ATCC 204508 / S288c) (Baker's yeast).